An 86-amino-acid chain; its full sequence is Large ribosomal subunit protein bL31B (86 aa).

It belongs to the bacterial ribosomal protein bL31 family. Type B subfamily. Part of the 50S ribosomal subunit.

In Streptococcus equi subsp. zooepidemicus (strain H70), this protein is Large ribosomal subunit protein bL31B.